Here is a 162-residue protein sequence, read N- to C-terminus: UPF0114 protein Sden_0436 (162 aa).

The next 3 membrane-spanning stretches (helical) occupy residues 15-35 (IMAP…IKFF), 53-73 (LVLI…LIMV), and 136-156 (IMWY…MGYL).

The protein belongs to the UPF0114 family.

It is found in the cell membrane. This is UPF0114 protein Sden_0436 from Shewanella denitrificans (strain OS217 / ATCC BAA-1090 / DSM 15013).